The sequence spans 235 residues: MPPRKRRRQCQKAQLLFHQQPLEGPKPHYESHQQPITHTVQVPSKPIDQSTITSWVLPQFDTAAESRFPTHRKHHRDQARHPTRRSTCKFPRLTFESPESSSSETLLLSNREQLQNSEKDAPRRPLVPLFSPQSCGELSVHVPQSLPHVFMPPDIQTPGSSVREDPISPDQKENSLPSCILGPRTPRTPEPGPVLVKDTPEEKYGIKVTWRRRRHLFAYLKERGKLDKSQFLVKT.

Serine 50 is subject to Phosphoserine. The RAD1-binding motif signature appears at 54 to 60; the sequence is SWVLPQF. Positions 66 to 106 are disordered; the sequence is SRFPTHRKHHRDQARHPTRRSTCKFPRLTFESPESSSSETL. Basic residues predominate over residues 69-87; sequence PTHRKHHRDQARHPTRRST. The segment covering 96-106 has biased composition (low complexity); it reads ESPESSSSETL. Positions 123-130 match the D-box motif; that stretch reads RRPLVPLF. Residues 156 to 198 are disordered; sequence QTPGSSVREDPISPDQKENSLPSCILGPRTPRTPEPGPVLVKD. Basic and acidic residues predominate over residues 162-173; it reads VREDPISPDQKE. Positions 171–175 match the KEN box motif; the sequence is QKENS.

Interacts (when phosphorylated by PLK1) with POLQ; promoting POLQ recruitment to DNA damage sites. Interacts with RAD1; interaction is direct and promotes association with the 9-1-1 (RAD9-RAD1-HUS1) complex. Interacts with RAD18. Interacts with TOPBP1. Interacts with UBE2N. Post-translationally, phosphorylated at Ser-50 by PLK1, promoting interaction with polymerase theta (POLQ). Ubiquitinated and degraded by the APC/C complex upon mitotic exit.

The protein localises to the nucleus. The protein resides in the chromosome. Involved in microhomology-mediated end-joining (MMEJ) DNA repair by promoting recruitment of polymerase theta (POLQ) to DNA damage sites during mitosis. MMEJ is an alternative non-homologous end-joining (NHEJ) machinery that takes place during mitosis to repair double-strand breaks in DNA that originate in S-phase. Accumulates in M-phase; following phosphorylation by PLK1, interacts with POLQ, enabling its recruitment to double-strand breaks for subsequent repair. Also involved in the DNA damage response (DDR) signaling in response to genotoxic stresses such as ionizing radiation (IR) during the S phase. Recruited to sites of DNA damage through interaction with the 9-1-1 cell-cycle checkpoint response complex and TOPBP1 in a ATR-dependent manner. Required for the progression of the G1 to S phase transition. Plays a role in the stimulation of CHEK1 phosphorylation. This chain is RAD9, HUS1, RAD1-interacting nuclear orphan protein 1 (Rhno1), found in Rattus norvegicus (Rat).